A 971-amino-acid polypeptide reads, in one-letter code: Reversion-inducing cysteine-rich protein with Kazal motifs (971 aa).

The first 22 residues, 1-22 (MASVRASPRSALLLLLAAAGVA), serve as a signal peptide directing secretion. Residues 37-84 (CCNHSKDNQMCRDVCEQIFSSKSESRLKHLLQRAPDYCPETMVEIWSC) form a Knot 1 repeat. The tract at residues 37–338 (CCNHSKDNQM…NPVEVSMLTC (302 aa)) is 5 X Knot repeats. 2 N-linked (GlcNAc...) asparagine glycosylation sites follow: N39 and N86. 2 Knot repeats span residues 104-141 (CCEL…LFSC) and 151-197 (CCSY…LIHC). N-linked (GlcNAc...) asparagine glycosylation is present at N200. Knot repeat units follow at residues 216 to 263 (CCDR…LWQC) and 292 to 338 (CCSK…MLTC). Residues N297 and N352 are each glycosylated (N-linked (GlcNAc...) asparagine). Kazal-like domains lie at 627–673 (TFTG…PCIS), 698–752 (TFDK…PCQP), and 753–789 (FCRA…PCQA). 6 cysteine pairs are disulfide-bonded: C633–C658, C635–C654, C643–C671, C716–C735, C724–C750, and C761–C787. Residues 704 to 750 (CSQYECVPRQLTCDQARDPVCDTDHMEHSNLCTLYQRGKSLSYRGPC) enclose the Kazal-like 2; degenerate domain. A lipid anchor (GPI-anchor amidated serine) is attached at S942. A propeptide spans 943–971 (SAVVGRPLFHSLLLLLSLGLTVHLLWTRP) (removed in mature form).

The protein belongs to the RECK family. In terms of assembly, interacts (via knot repeats) with WNT7A (via disordered linker region); the interaction is direct. Interacts (via knot repeats) with WNT7B (via disordered linker region); the interaction is direct. Interacts with ADGRA2; the interaction is direct. Interacts with MMP9.

The protein resides in the cell membrane. Its function is as follows. Functions together with ADGRA2 to enable brain endothelial cells to selectively respond to Wnt7 signals (WNT7A or WNT7B). Plays a key role in Wnt7-specific responses: required for central nervous system (CNS) angiogenesis and blood-brain barrier regulation. Acts as a Wnt7-specific coactivator of canonical Wnt signaling by decoding Wnt ligands: acts by interacting specifically with the disordered linker region of Wnt7, thereby conferring ligand selectivity for Wnt7. ADGRA2 is then required to deliver RECK-bound Wnt7 to frizzled by assembling a higher-order RECK-ADGRA2-Fzd-LRP5-LRP6 complex. Also acts as a serine protease inhibitor: negatively regulates matrix metalloproteinase-9 (MMP9) by suppressing MMP9 secretion and by direct inhibition of its enzymatic activity. Also inhibits metalloproteinase activity of MMP2 and MMP14 (MT1-MMP). The protein is Reversion-inducing cysteine-rich protein with Kazal motifs of Mus musculus (Mouse).